A 186-amino-acid polypeptide reads, in one-letter code: DNA damage up-regulated protein (186 aa).

The segment at 147–166 (ATENGEGCRPARDPASSPSS) is disordered.

In terms of assembly, interacts with DNA damage response proteins ATR, H2AX, PCNA, RAD18 and RAD51C. Forms a complex with H2AX and RAD18 following DDUP phosphorylation. Phosphorylated in an ATR-dependent manner; phosphorylation is required for interaction with H2AX and RAD18 and for DDUP-mediated DNA damage repair.

It is found in the nucleus. It localises to the chromosome. Functionally, promotes DNA damage repair through both homologous recombination repair (HRR) and post-replication repair (PRR) mechanisms. Enhances the retention of DNA damage response protein RAD18 at sites of DNA damage. This allows for HRR via association of RAD18 with RAD51C and for PRR via RAD18-mediated promotion of PCNA monoubiquitination. This is DNA damage up-regulated protein from Homo sapiens (Human).